A 138-amino-acid polypeptide reads, in one-letter code: uncharacterized protein (138 aa).

Positions 17 to 38 form a DNA-binding region, H-T-H motif; it reads LCRNDVAHEAGTNNVQIMRIEK.

This is an uncharacterized protein from Herpetosiphon aurantiacus (Herpetosiphon giganteus).